The primary structure comprises 481 residues: Leukocyte immunoglobulin-like receptor subfamily A member 6 (481 aa).

Positions 1–23 are cleaved as a signal peptide; that stretch reads MTPALTALLCLGLSLGPRTHVQA. The Ig-like C2-type 1 domain occupies 24–118; the sequence is GPLPKPTLWA…PSDPLELVVT (95 aa). Residues 24 to 447 lie on the Extracellular side of the membrane; the sequence is GPLPKPTLWA…SHAKDYTVEN (424 aa). Cysteine 49 and cysteine 98 form a disulfide bridge. N-linked (GlcNAc...) asparagine glycosylation is present at asparagine 139. 2 disulfide bridges follow: cysteine 144/cysteine 196 and cysteine 245/cysteine 296. Ig-like C2-type domains lie at 225–314 and 323–408; these read PSLL…DPLN and DRVS…HLLS. Asparagine 301 and asparagine 340 each carry an N-linked (GlcNAc...) asparagine glycan. A disulfide bridge links cysteine 345 with cysteine 396. Residues 418-439 are disordered; that stretch reads VSGPSGGPSLPPTGPPSTPASH. Residues 426-435 are compositionally biased toward pro residues; that stretch reads SLPPTGPPST. A helical membrane pass occupies residues 448 to 468; it reads LIRMGMAGLVLVVLGILLFEA. The Cytoplasmic segment spans residues 469–481; sequence QHSQRSPQDAARR.

Its subcellular location is the membrane. May act as receptor for class I MHC antigens. The sequence is that of Leukocyte immunoglobulin-like receptor subfamily A member 6 (LILRA6) from Pan troglodytes (Chimpanzee).